A 249-amino-acid polypeptide reads, in one-letter code: tRNA pseudouridine synthase A (249 aa).

Asp53 (nucleophile) is an active-site residue. Tyr111 contacts substrate.

The protein belongs to the tRNA pseudouridine synthase TruA family. As to quaternary structure, homodimer.

It catalyses the reaction uridine(38/39/40) in tRNA = pseudouridine(38/39/40) in tRNA. Functionally, formation of pseudouridine at positions 38, 39 and 40 in the anticodon stem and loop of transfer RNAs. This Streptococcus gordonii (strain Challis / ATCC 35105 / BCRC 15272 / CH1 / DL1 / V288) protein is tRNA pseudouridine synthase A.